Reading from the N-terminus, the 508-residue chain is ATP synthase subunit alpha, chloroplastic (508 aa).

170–177 lines the ATP pocket; it reads GDRQTGKT.

It belongs to the ATPase alpha/beta chains family. As to quaternary structure, F-type ATPases have 2 components, F(1) - the catalytic core - and F(0) - the membrane proton channel. F(1) has five subunits: alpha(3), beta(3), gamma(1), delta(1), epsilon(1). F(0) has four main subunits: a(1), b(1), b'(1) and c(10-14). The alpha and beta chains form an alternating ring which encloses part of the gamma chain. F(1) is attached to F(0) by a central stalk formed by the gamma and epsilon chains, while a peripheral stalk is formed by the delta, b and b' chains.

It localises to the plastid. Its subcellular location is the chloroplast thylakoid membrane. The enzyme catalyses ATP + H2O + 4 H(+)(in) = ADP + phosphate + 5 H(+)(out). Functionally, f(1)F(0) ATP synthase produces ATP from ADP in the presence of a proton or sodium gradient. F-type ATPases consist of two structural domains, F(1) containing the extramembraneous catalytic core and F(0) containing the membrane proton channel, linked together by a central stalk and a peripheral stalk. During catalysis, ATP synthesis in the catalytic domain of F(1) is coupled via a rotary mechanism of the central stalk subunits to proton translocation. The alpha chain is a regulatory subunit. The chain is ATP synthase subunit alpha, chloroplastic from Chlamydomonas reinhardtii (Chlamydomonas smithii).